The primary structure comprises 286 residues: L-ribulose 3-epimerase (286 aa).

Residues H12, S69, E152, and E158 each coordinate D-allulose. H12, S69, E152, and E158 together coordinate D-fructose. The Proton donor/acceptor role is filled by E152. E152 is a binding site for Mn(2+). Position 185 (D185) interacts with Mn(2+). H188, H211, R217, and E246 together coordinate D-allulose. Residues H188, H211, R217, and E246 each coordinate D-fructose. Position 211 (H211) interacts with Mn(2+). The active-site Proton donor/acceptor is the E246. A Mn(2+)-binding site is contributed by E246.

It belongs to the hyi family. Homodimer. It depends on Mn(2+) as a cofactor.

The enzyme catalyses L-ribulose = L-xylulose. It carries out the reaction D-ribulose = D-xylulose. The catalysed reaction is D-allulose = keto-D-fructose. It catalyses the reaction keto-L-tagatose = keto-L-sorbose. The enzyme catalyses keto-D-tagatose = keto-D-sorbose. In terms of biological role, catalyzes the epimerization of various ketoses at the C(3) position. Exhibits the highest enzymatic activity toward L-ribulose, followed by D-ribulose, D-allulose and D-fructose. Shows lower activity with L-xylulose, L-tagatose, D-xylulose, D-tagatose, L-sorbose, D-sorbose, and weak activity with L-allulose and L-fructose. The sequence is that of L-ribulose 3-epimerase from Methylomonas sp. (strain DH-1).